A 919-amino-acid chain; its full sequence is GPI ethanolamine phosphate transferase 1 (919 aa).

Residues 1–8 (MWSRHRLY) are Cytoplasmic-facing. A helical membrane pass occupies residues 9-29 (FIVAGVLFHLFYLWSIFDIYF). Over 30 to 456 (VSPLVHGMKQ…TTYNWRFIRT (427 aa)) the chain is Lumenal. N-linked (GlcNAc...) asparagine glycans are attached at residues asparagine 138, asparagine 196, asparagine 201, asparagine 285, and asparagine 311. A helical transmembrane segment spans residues 457–477 (IVTLGFLGWIVYSFSIFLRLF). Topologically, residues 478–487 (ILNRDYNSHK) are cytoplasmic. A helical membrane pass occupies residues 488 to 508 (SLLNYFIFGSLTIILNYVLYY). The Lumenal segment spans residues 509–510 (QK). A helical membrane pass occupies residues 511-531 (APFNYYMYLFFPLIFWSEIFT). At 532-558 (DRVVLDDGVKEFLKGISIPKRIILVSA) the chain is on the cytoplasmic side. Residues 559–579 (IILVYESIVYAFFDRWIFSLI) form a helical membrane-spanning segment. Residues 580–598 (FNMLSFYPLICGYRDWKRN) are Lumenal-facing. A helical membrane pass occupies residues 599–619 (TLWFITGAAISVFTLLDAVKI). Glutamate 620 is a topological domain (cytoplasmic). A helical membrane pass occupies residues 621–641 (SLTQINIASGLIVLTALSGFL). The Lumenal segment spans residues 642–653 (HLRKQLNSYTTT). The chain crosses the membrane as a helical span at residues 654 to 674 (VFICQILLVILMVLATNKSIV). Residues 675–686 (SLQNRTGLPRDA) are Cytoplasmic-facing. Residues 687-707 (QVAGWVILVVSLLLMPLIHYM) traverse the membrane as a helical segment. Topologically, residues 708–718 (KPNNNYKVRML) are lumenal. Residues 719 to 739 (IIFLTFAPTFIILTISFESFF) form a helical membrane-spanning segment. Residues 740 to 773 (YLVFSAYIVQWIEIESKLKEQTPNTSHYKQLIRV) are Cytoplasmic-facing. Residues 774–794 (TIIGFFLLQNAFFGTGNVASI) form a helical membrane-spanning segment. At 795–815 (SSFSLDSVYRLMPIFDPFPMG) the chain is on the lumenal side. Residues 816–836 (ALLVIKLIIPYIILSAGLGIL) form a helical membrane-spanning segment. Residues 837-845 (NLKLHIKDY) are Cytoplasmic-facing. The chain crosses the membrane as a helical span at residues 846-866 (TISTLIISTSDILSLNFFYLL). Topologically, residues 867 to 882 (KTEGSWLDIGITISNY) are lumenal. The helical transmembrane segment at 883–903 (CLAILSSLFMLILEIVAHVVL) threads the bilayer. At 904–919 (KNVQLSKPVIASKKTN) the chain is on the cytoplasmic side.

This sequence belongs to the PIGG/PIGN/PIGO family. PIGN subfamily.

It is found in the endoplasmic reticulum membrane. The protein operates within glycolipid biosynthesis; glycosylphosphatidylinositol-anchor biosynthesis. Its function is as follows. Ethanolamine phosphate transferase involved in glycosylphosphatidylinositol-anchor biosynthesis. Transfers ethanolamine phosphate to the first alpha-1,4-linked mannose of the glycosylphosphatidylinositol precursor of GPI-anchor. The polypeptide is GPI ethanolamine phosphate transferase 1 (MCD4) (Kluyveromyces lactis (strain ATCC 8585 / CBS 2359 / DSM 70799 / NBRC 1267 / NRRL Y-1140 / WM37) (Yeast)).